The sequence spans 463 residues: MPPAPPDQKPCHLQPAPYRALSETILFGSLNEERWWHSTAPILSRLLISSNYDVDVQYKYLSLYRHLVLPALGPYPQRDPETGIIATQWRSGMVLTGLPIEFSNNVARALIRIGVDPVTADSGTAQDPFNTARPKGYLETAARLLPGVDLTRFYEFETELVITKEEEAVLQANPDLFKSPWKSQILTAMDLQKSGTVLVKAYFYPQPKSAVTGRSTEELLVNAIRKVDRESRFETQLANLERYMERRRRGLHVPVVTADKPPPTEADKTFDACSFFPHFLSTDLVEPGKSRVKFYASERHVNLKMVEDIWTFGGLRRDPDALKGLELLRHFWADIQMREGYYTMPRGFCELGKSSAGFEAPMMFHFHLDGSQSPFPDPQMYVCVFGMNSRKLVEGLTTFYRRLGWEDMASHYQGNFLANYPDEDFEKAAHLCAYVSFAYKDGGAYVTLYNHSFNPLGDVALAN.

Brevianamide F is bound by residues M93 and E101. Dimethylallyl diphosphate-binding residues include R112, K200, and Y202. Residue Y204 participates in brevianamide F binding. K293, Y295, Q379, Y381, Y445, and Y449 together coordinate dimethylallyl diphosphate.

Belongs to the tryptophan dimethylallyltransferase family.

It catalyses the reaction brevianamide F + dimethylallyl diphosphate = tryprostatin B + diphosphate. It participates in mycotoxin biosynthesis. Brevianamide F prenyltransferase; part of the gene cluster that mediates the biosynthesis of fumitremorgins, indole alkaloids that carry not only intriguing chemical structures, but also interesting biological and pharmacological activities. The biosynthesis of fumitremorgin-type alkaloids begins by condensation of the two amino acids L-tryptophan and L-proline to brevianamide F, catalyzed by the non-ribosomal peptide synthetase ftmPS/ftmA. Brevianamide F is then prenylated by the prenyltransferase ftmPT1/ftmB in the presence of dimethylallyl diphosphate, resulting in the formation of tryprostatin B. The three cytochrome P450 monooxygenases, ftmP450-1/ftmC, ftmP450-2/ftmE and ftmP450-3/FtmG, are responsible for the conversion of tryprostatin B to 6-hydroxytryprostatin B, tryprostatin A to fumitremorgin C and fumitremorgin C to 12,13-dihydroxyfumitremorgin C, respectively. The putative methyltransferase ftmMT/ftmD is expected for the conversion of 6-hydroxytryprostatin B to tryprostatin A. FtmPT2/FtmH catalyzes the prenylation of 12,13-dihydroxyfumitre-morgin C in the presence of dimethylallyl diphosphate, resulting in the formation of fumitremorgin B. Fumitremorgin B is further converted to verruculogen by ftmOx1/ftmF via the insertion of an endoperoxide bond between the two prenyl moieties. Finally, verruculogen is further converted to fumitremorgin A by the verruculogen prenyltransferase ftmPT3. This Neosartorya fischeri (strain ATCC 1020 / DSM 3700 / CBS 544.65 / FGSC A1164 / JCM 1740 / NRRL 181 / WB 181) (Aspergillus fischerianus) protein is Tryprostatin B synthase.